Here is a 206-residue protein sequence, read N- to C-terminus: Methylthioribulose-1-phosphate dehydratase (206 aa).

Zn(2+) contacts are provided by histidine 96 and histidine 98.

This sequence belongs to the aldolase class II family. MtnB subfamily. The cofactor is Zn(2+).

It catalyses the reaction 5-(methylsulfanyl)-D-ribulose 1-phosphate = 5-methylsulfanyl-2,3-dioxopentyl phosphate + H2O. It participates in amino-acid biosynthesis; L-methionine biosynthesis via salvage pathway; L-methionine from S-methyl-5-thio-alpha-D-ribose 1-phosphate: step 2/6. In terms of biological role, catalyzes the dehydration of methylthioribulose-1-phosphate (MTRu-1-P) into 2,3-diketo-5-methylthiopentyl-1-phosphate (DK-MTP-1-P). This Exiguobacterium sibiricum (strain DSM 17290 / CCUG 55495 / CIP 109462 / JCM 13490 / 255-15) protein is Methylthioribulose-1-phosphate dehydratase.